Consider the following 1317-residue polypeptide: uncharacterized protein (1317 aa).

This sequence belongs to the oxoprolinase family.

This is an uncharacterized protein from Schizosaccharomyces pombe (strain 972 / ATCC 24843) (Fission yeast).